Here is a 372-residue protein sequence, read N- to C-terminus: UDP-N-acetylglucosamine--N-acetylmuramyl-(pentapeptide) pyrophosphoryl-undecaprenol N-acetylglucosamine transferase (372 aa).

Residues 11–13 (TAG), Asn123, Arg160, Ser200, and Gln298 each bind UDP-N-acetyl-alpha-D-glucosamine.

The protein belongs to the glycosyltransferase 28 family. MurG subfamily.

The protein resides in the cell membrane. It carries out the reaction di-trans,octa-cis-undecaprenyl diphospho-N-acetyl-alpha-D-muramoyl-L-alanyl-D-glutamyl-meso-2,6-diaminopimeloyl-D-alanyl-D-alanine + UDP-N-acetyl-alpha-D-glucosamine = di-trans,octa-cis-undecaprenyl diphospho-[N-acetyl-alpha-D-glucosaminyl-(1-&gt;4)]-N-acetyl-alpha-D-muramoyl-L-alanyl-D-glutamyl-meso-2,6-diaminopimeloyl-D-alanyl-D-alanine + UDP + H(+). It participates in cell wall biogenesis; peptidoglycan biosynthesis. Its function is as follows. Cell wall formation. Catalyzes the transfer of a GlcNAc subunit on undecaprenyl-pyrophosphoryl-MurNAc-pentapeptide (lipid intermediate I) to form undecaprenyl-pyrophosphoryl-MurNAc-(pentapeptide)GlcNAc (lipid intermediate II). The sequence is that of UDP-N-acetylglucosamine--N-acetylmuramyl-(pentapeptide) pyrophosphoryl-undecaprenol N-acetylglucosamine transferase from Cutibacterium acnes (strain DSM 16379 / KPA171202) (Propionibacterium acnes).